A 321-amino-acid chain; its full sequence is Biotin synthase (321 aa).

Residues 45–271 (YYGKKVKLNM…INPTKEIRIA (227 aa)) form the Radical SAM core domain. Residues Cys-63, Cys-67, and Cys-70 each contribute to the [4Fe-4S] cluster site. [2Fe-2S] cluster contacts are provided by Cys-106, Cys-139, Cys-199, and Arg-269.

Belongs to the radical SAM superfamily. Biotin synthase family. In terms of assembly, homodimer. [4Fe-4S] cluster serves as cofactor. Requires [2Fe-2S] cluster as cofactor.

It catalyses the reaction (4R,5S)-dethiobiotin + (sulfur carrier)-SH + 2 reduced [2Fe-2S]-[ferredoxin] + 2 S-adenosyl-L-methionine = (sulfur carrier)-H + biotin + 2 5'-deoxyadenosine + 2 L-methionine + 2 oxidized [2Fe-2S]-[ferredoxin]. It participates in cofactor biosynthesis; biotin biosynthesis; biotin from 7,8-diaminononanoate: step 2/2. In terms of biological role, catalyzes the conversion of dethiobiotin (DTB) to biotin by the insertion of a sulfur atom into dethiobiotin via a radical-based mechanism. The chain is Biotin synthase from Staphylococcus epidermidis (strain ATCC 35984 / DSM 28319 / BCRC 17069 / CCUG 31568 / BM 3577 / RP62A).